The primary structure comprises 365 residues: tRNA-specific 2-thiouridylase MnmA (365 aa).

Residues 14–21 (AMSGGVDS) and Leu40 each bind ATP. Cys108 (nucleophile) is an active-site residue. A disulfide bridge connects residues Cys108 and Cys204. Residue Gly132 participates in ATP binding. The tract at residues 154–156 (KDQ) is interaction with tRNA. The Cysteine persulfide intermediate role is filled by Cys204.

This sequence belongs to the MnmA/TRMU family.

It is found in the cytoplasm. It carries out the reaction S-sulfanyl-L-cysteinyl-[protein] + uridine(34) in tRNA + AH2 + ATP = 2-thiouridine(34) in tRNA + L-cysteinyl-[protein] + A + AMP + diphosphate + H(+). Its function is as follows. Catalyzes the 2-thiolation of uridine at the wobble position (U34) of tRNA, leading to the formation of s(2)U34. This chain is tRNA-specific 2-thiouridylase MnmA, found in Rickettsia felis (strain ATCC VR-1525 / URRWXCal2) (Rickettsia azadi).